We begin with the raw amino-acid sequence, 127 residues long: Holo-[acyl-carrier-protein] synthase (127 aa).

2 residues coordinate Mg(2+): aspartate 8 and glutamate 57.

It belongs to the P-Pant transferase superfamily. AcpS family. The cofactor is Mg(2+).

Its subcellular location is the cytoplasm. It catalyses the reaction apo-[ACP] + CoA = holo-[ACP] + adenosine 3',5'-bisphosphate + H(+). Transfers the 4'-phosphopantetheine moiety from coenzyme A to a Ser of acyl-carrier-protein. The chain is Holo-[acyl-carrier-protein] synthase from Hydrogenovibrio crunogenus (strain DSM 25203 / XCL-2) (Thiomicrospira crunogena).